The primary structure comprises 302 residues: Sulfate adenylyltransferase subunit 2 (302 aa).

Belongs to the PAPS reductase family. CysD subfamily. In terms of assembly, heterodimer composed of CysD, the smaller subunit, and CysN.

It carries out the reaction sulfate + ATP + H(+) = adenosine 5'-phosphosulfate + diphosphate. It participates in sulfur metabolism; hydrogen sulfide biosynthesis; sulfite from sulfate: step 1/3. With CysN forms the ATP sulfurylase (ATPS) that catalyzes the adenylation of sulfate producing adenosine 5'-phosphosulfate (APS) and diphosphate, the first enzymatic step in sulfur assimilation pathway. APS synthesis involves the formation of a high-energy phosphoric-sulfuric acid anhydride bond driven by GTP hydrolysis by CysN coupled to ATP hydrolysis by CysD. The protein is Sulfate adenylyltransferase subunit 2 of Xanthomonas campestris pv. campestris (strain 8004).